Reading from the N-terminus, the 589-residue chain is Zinc finger protein 131 (589 aa).

Residues Thr34–Gly98 form the BTB domain. A Nuclear localization signal 1 motif is present at residues Thr137 to Ala148. A compositionally biased stretch (basic and acidic residues) spans Gly224–Gly234. Residues Gly224–Lys247 form a disordered region. 2 C2H2-type zinc fingers span residues Phe254–His277 and His294–His316. Glycyl lysine isopeptide (Lys-Gly) (interchain with G-Cter in SUMO2) cross-links involve residues Lys255 and Lys261. The short motif at Val283 to His294 is the Nuclear localization signal 2 element. The C2H2-type 3; degenerate zinc-finger motif lies at Phe322–Gly347. 2 C2H2-type zinc fingers span residues Tyr358 to His380 and Asn386 to His409. The segment covering Asn539–Thr583 has biased composition (basic and acidic residues). Positions Asn539–Glu589 are disordered. Residue Lys567 forms a Glycyl lysine isopeptide (Lys-Gly) (interchain with G-Cter in SUMO) linkage.

This sequence belongs to the krueppel C2H2-type zinc-finger protein family. Post-translationally, monosumoylated at Lys-567 by CBX4 and UHRF2. Sumoylation may potentiate ZNF131 inhibition of estrogen signaling. Sumoylation does not interfere with ubiquitination. In terms of processing, ubiquitinated.

The protein resides in the nucleus. Its function is as follows. May be involved in transcriptional regulation as a repressor of ESR1/ER-alpha signaling. Plays a role during development and organogenesis as well as in the function of the adult central nervous system. This is Zinc finger protein 131 (ZNF131) from Pongo abelii (Sumatran orangutan).